Reading from the N-terminus, the 329-residue chain is D-alanine--D-alanine ligase (329 aa).

The ATP-grasp domain maps to 120–326 (KLWLSAIGIP…FAHYLEQILR (207 aa)). 150–205 (ALAKWGKVFIKAASQGSSVGCYSASNETDLLQGIKDAFGYSEQVLIEKAVKPRELE) serves as a coordination point for ATP. Mg(2+) contacts are provided by D280, E293, and N295.

The protein belongs to the D-alanine--D-alanine ligase family. Mg(2+) is required as a cofactor. The cofactor is Mn(2+).

Its subcellular location is the cytoplasm. The catalysed reaction is 2 D-alanine + ATP = D-alanyl-D-alanine + ADP + phosphate + H(+). It participates in cell wall biogenesis; peptidoglycan biosynthesis. In terms of biological role, cell wall formation. The chain is D-alanine--D-alanine ligase from Aeromonas salmonicida (strain A449).